A 311-amino-acid polypeptide reads, in one-letter code: Transmembrane protein DDB_G0273707/DDB_G0273361 (311 aa).

A disordered region spans residues M1 to N113. N8 carries N-linked (GlcNAc...) asparagine glycosylation. Positions L9–T18 are enriched in polar residues. Residues N35, N38, N62, and N76 are each glycosylated (N-linked (GlcNAc...) asparagine). 2 stretches are compositionally biased toward low complexity: residues S37–N67 and N76–E111. The stretch at N95–L124 forms a coiled coil. A run of 5 helical transmembrane segments spans residues L150–L170, I181–P201, L208–Y228, V235–H255, and F276–I296.

Its subcellular location is the membrane. This Dictyostelium discoideum (Social amoeba) protein is Transmembrane protein DDB_G0273707/DDB_G0273361.